Here is a 107-residue protein sequence, read N- to C-terminus: Large ribosomal subunit protein uL24 (107 aa).

It belongs to the universal ribosomal protein uL24 family. In terms of assembly, part of the 50S ribosomal subunit.

In terms of biological role, one of two assembly initiator proteins, it binds directly to the 5'-end of the 23S rRNA, where it nucleates assembly of the 50S subunit. Its function is as follows. One of the proteins that surrounds the polypeptide exit tunnel on the outside of the subunit. The protein is Large ribosomal subunit protein uL24 of Solidesulfovibrio magneticus (strain ATCC 700980 / DSM 13731 / RS-1) (Desulfovibrio magneticus).